A 334-amino-acid chain; its full sequence is Trans-3-hydroxy-L-proline dehydratase (334 aa).

Cys-91 acts as the Proton acceptor in catalysis. Substrate contacts are provided by residues 92–93 (GH), Asp-250, and 255–256 (GT).

Belongs to the proline racemase family.

It carries out the reaction trans-3-hydroxy-L-proline = 1-pyrroline-2-carboxylate + H2O. In terms of biological role, catalyzes the dehydration of trans-3-hydroxy-L-proline (t3LHyp) to Delta(1)-pyrroline-2-carboxylate (Pyr2C). Is likely involved in a degradation pathway that converts t3LHyp to L-proline, which allows B.cereus to grow on t3LHyp as a sole carbon source. Displays no proline racemase activity. The polypeptide is Trans-3-hydroxy-L-proline dehydratase (Bacillus cereus (strain ATCC 14579 / DSM 31 / CCUG 7414 / JCM 2152 / NBRC 15305 / NCIMB 9373 / NCTC 2599 / NRRL B-3711)).